Consider the following 70-residue polypeptide: Disintegrin triflavin (70 aa).

The region spanning 1-70 (GEECDCGSPS…SADCPRWNGL (70 aa)) is the Disintegrin domain. 6 disulfide bridges follow: Cys-4/Cys-19, Cys-6/Cys-14, Cys-13/Cys-36, Cys-27/Cys-33, Cys-32/Cys-57, and Cys-45/Cys-64. A Cell attachment site motif is present at residues 49–51 (RGD).

The protein belongs to the venom metalloproteinase (M12B) family. P-II subfamily. P-IIa sub-subfamily. As to quaternary structure, monomer. In terms of tissue distribution, expressed by the venom gland.

The protein localises to the secreted. In terms of biological role, inhibits fibrinogen interaction with platelets. Acts by binding to alpha-IIb/beta-3 (ITGA2B/ITGB3) on the platelet surface and inhibits aggregation induced by ADP, thrombin, platelet-activating factor and collagen. This Protobothrops flavoviridis (Habu) protein is Disintegrin triflavin.